Reading from the N-terminus, the 317-residue chain is MPVQGSQRRLLGSLNSTPTATPHLGLAANQTGAWCLEVSIPDGLFLSLGLVSLVENVLVVTAIAKNRNLHSPMYCFICCLALSDLLVSGSNMLETAVTLLLEAGALAARAAVVQQLDNVIDVITCSSMLSSLCFLGAIAVDRYISIFYALRYHSIVTLPRARRAVAAIWVASVLFSMLFIAYYDHAAVLLCLVVFFLAMLVLMAVLYVHMLARACQHAQGIARLHKRQRPAHQGFGLKGAATLTILLGIFFLCWGPFFLHLTLIVLCPQHPTCSCIFKNFNLFLALIICNAIIDPLIYAFRSQELRRTLKEVLLCSW.

At Met-1 to Glu-37 the chain is on the extracellular side. N-linked (GlcNAc...) asparagine glycosylation is present at Asn-29. The helical transmembrane segment at Val-38–Ile-63 threads the bilayer. Residues Ala-64–Pro-72 are Cytoplasmic-facing. The chain crosses the membrane as a helical span at residues Met-73 to Leu-93. The Extracellular segment spans residues Glu-94–Asn-118. The chain crosses the membrane as a helical span at residues Val-119–Val-140. The Cytoplasmic segment spans residues Asp-141 to Arg-163. A helical transmembrane segment spans residues Ala-164–Tyr-183. Residues Asp-184–Cys-191 are Extracellular-facing. Residues Leu-192 to Leu-211 form a helical membrane-spanning segment. The Cytoplasmic segment spans residues Ala-212–Ala-240. The chain crosses the membrane as a helical span at residues Ala-241–Leu-266. Residues Cys-267–Asn-279 are Extracellular-facing. The helical transmembrane segment at Phe-280–Phe-300 threads the bilayer. Residues Arg-301 to Trp-317 lie on the Cytoplasmic side of the membrane. Cys-315 carries the S-palmitoyl cysteine lipid modification.

The protein belongs to the G-protein coupled receptor 1 family. Interacts with MGRN1, but does not undergo MGRN1-mediated ubiquitination; this interaction competes with GNAS-binding and thus inhibits agonist-induced cAMP production. Interacts with OPN3; the interaction results in a decrease in MC1R-mediated cAMP signaling and ultimately a decrease in melanin production in melanocytes.

It localises to the cell membrane. In terms of biological role, receptor for MSH (alpha, beta and gamma) and ACTH. The activity of this receptor is mediated by G proteins which activate adenylate cyclase. Mediates melanogenesis, the production of eumelanin (black/brown) and phaeomelanin (red/yellow), via regulation of cAMP signaling in melanocytes. This chain is Melanocyte-stimulating hormone receptor (MC1R), found in Allenopithecus nigroviridis (Allen's swamp monkey).